The chain runs to 300 residues: Haloalkane dehalogenase (300 aa).

Residues 32–155 (AIVFQHGNPT…PAVRGVFQGF (124 aa)) form the AB hydrolase-1 domain. Aspartate 109 serves as the catalytic Nucleophile. The active-site Proton donor is the glutamate 133. Histidine 273 acts as the Proton acceptor in catalysis.

This sequence belongs to the haloalkane dehalogenase family. Type 2 subfamily. As to quaternary structure, monomer.

The catalysed reaction is 1-haloalkane + H2O = a halide anion + a primary alcohol + H(+). Its function is as follows. Catalyzes hydrolytic cleavage of carbon-halogen bonds in halogenated aliphatic compounds, leading to the formation of the corresponding primary alcohols, halide ions and protons. In Mycobacterium bovis (strain BCG / Pasteur 1173P2), this protein is Haloalkane dehalogenase.